A 275-amino-acid chain; its full sequence is Large ribosomal subunit protein uL2 (275 aa).

Residues 216-275 are disordered; that stretch reads GIRPQTRGSAMNPIDHPHGGGEGKTNSGRHPVTPWGMPTKGYKTRKKKASDKLIISKRKK. A compositionally biased stretch (basic residues) spans 257–275; that stretch reads YKTRKKKASDKLIISKRKK.

Belongs to the universal ribosomal protein uL2 family. As to quaternary structure, part of the 50S ribosomal subunit. Forms a bridge to the 30S subunit in the 70S ribosome.

In terms of biological role, one of the primary rRNA binding proteins. Required for association of the 30S and 50S subunits to form the 70S ribosome, for tRNA binding and peptide bond formation. It has been suggested to have peptidyltransferase activity; this is somewhat controversial. Makes several contacts with the 16S rRNA in the 70S ribosome. The sequence is that of Large ribosomal subunit protein uL2 from Aliarcobacter butzleri (strain RM4018) (Arcobacter butzleri).